A 90-amino-acid polypeptide reads, in one-letter code: MKFIFIGLIKFYRSAISPFTPSSCRFYPTCSEYGLEAIKRFGAFKGGILTIKRISKCHPFHPGGVDVVPDKVKNINNEKHLEKGVIRNED.

Belongs to the UPF0161 family.

It localises to the cell membrane. Functionally, could be involved in insertion of integral membrane proteins into the membrane. The protein is Putative membrane protein insertion efficiency factor of Oceanobacillus iheyensis (strain DSM 14371 / CIP 107618 / JCM 11309 / KCTC 3954 / HTE831).